The following is a 344-amino-acid chain: GTPase Obg (344 aa).

A compositionally biased stretch (polar residues) spans 1–12 (MFVDSASFSVSS). Positions 1 to 36 (MFVDSASFSVSSGKGGPGCASFRREKHVPLGGPDGG) are disordered. The region spanning 1–158 (MFVDSASFSV…RNIRLELKLI (158 aa)) is the Obg domain. The OBG-type G domain occupies 159-341 (ADVGLVGFPN…LKFGLLEILK (183 aa)). Residues 165-172 (GFPNVGKS), 190-194 (FTTLT), 212-215 (DIPG), 280-283 (TRLD), and 322-324 (SSV) contribute to the GTP site. Mg(2+) is bound by residues serine 172 and threonine 192.

This sequence belongs to the TRAFAC class OBG-HflX-like GTPase superfamily. OBG GTPase family. As to quaternary structure, monomer. It depends on Mg(2+) as a cofactor.

It is found in the cytoplasm. Its function is as follows. An essential GTPase which binds GTP, GDP and possibly (p)ppGpp with moderate affinity, with high nucleotide exchange rates and a fairly low GTP hydrolysis rate. Plays a role in control of the cell cycle, stress response, ribosome biogenesis and in those bacteria that undergo differentiation, in morphogenesis control. The protein is GTPase Obg of Campylobacter fetus subsp. fetus (strain 82-40).